A 210-amino-acid chain; its full sequence is Pre-mRNA-splicing factor 38 (210 aa).

The segment at 181–210 is disordered; it reads PLSSSSDEEDDDEEQISKLESNEGAVDRNI. Residues 195 to 210 show a composition bias toward basic and acidic residues; sequence QISKLESNEGAVDRNI.

The protein belongs to the PRP38 family. In terms of assembly, component of the 25S U4/U6.U5 tri-snRNP particle, a subcomplex of the spliceosome.

It is found in the nucleus. Required for pre-mRNA splicing and maintenance of stable U6 small nuclear RNA levels. Implicated in the formation of stable and biologically active snRNP structures. As part of the U4/U6.U5 tri-snRNP particle, dispensible for spliceosome assembly, but required for conformational changes, which result in U4 snRNA release and the subsequent catalytic activation of the spliceosome. This is Pre-mRNA-splicing factor 38 from Schizosaccharomyces pombe (strain 972 / ATCC 24843) (Fission yeast).